A 124-amino-acid polypeptide reads, in one-letter code: Urease subunit beta (124 aa).

It belongs to the urease beta subunit family. As to quaternary structure, heterotrimer of UreA (gamma), UreB (beta) and UreC (alpha) subunits. Three heterotrimers associate to form the active enzyme.

The protein resides in the cytoplasm. The catalysed reaction is urea + 2 H2O + H(+) = hydrogencarbonate + 2 NH4(+). Its pathway is nitrogen metabolism; urea degradation; CO(2) and NH(3) from urea (urease route): step 1/1. In Halalkalibacterium halodurans (strain ATCC BAA-125 / DSM 18197 / FERM 7344 / JCM 9153 / C-125) (Bacillus halodurans), this protein is Urease subunit beta.